Here is a 245-residue protein sequence, read N- to C-terminus: Terpene cyclase esdpB (245 aa).

7 helical membrane passes run 19–39 (MVASIFLISGTGWIVNYVTTI), 48–68 (SGVTLLSLCNNLAWETVFAVI), 75–95 (IAALVITVWLLVNIYVIYVSV), 112–132 (LPVVTLLGFVGFLTGHIALSM), 140–160 (LYWGGMICQVTLSASALGLLI), 177–197 (FIASSFGVPGLFVRAVYWPSA), and 208–228 (WLSGVFFLLDLSYGAIYYHIS).

It belongs to the paxB family.

The protein resides in the membrane. It participates in secondary metabolite biosynthesis; terpenoid biosynthesis. Terpene cyclase; part of the cluster that mediates the biosynthesis of shearones, diterpenoid pyrones (DPs) which are structurally diverse meroterpenoids consisting of a diterpene linked by a pyrone, and which may exhibit a range of bioactivities. Within the pathway, esdpB takes part to the biosynthesis of the molecular scaffold by catalyzing the cyclization of the prenyl group initiated by protonation and ring-opening of the epoxide to produce the diterpenoid pyrone scaffold. The molecular scaffold is commonly biosynthesized by a series of enzymes including the non-reducing polyketide synthase (NR-PKS) esdpA that generates an alpha-pyrone; the prenyltransferase esdpC that attaches a geranylgeranyl pyrophosphate (GGPP) produced by the GGPP synthase (GGPPS) esdpD onto the pyrone unit; the FAD-dependent monooxygenase esdpE that converts an olefin on the diterpene unit into an epoxide; and the terpene cyclase esdpB that catalyzes the cyclization reactions to give the molecular backbone shearone A. In the modification steps, esdpF oxidizes the hydroxy group to a ketone at C-3 and esdpG then attaches hydroxy groups at both C-11 and C-12. After that, esdpI hydroxylates at C-20 and esdpH hydroxylates at C-6'. The ether bridge is generated by nucleophilic attack of the hydroxy group at C-20 to the carbonyl carbon at C-3. EsdpH can also functions prior to esdpI. The different combinations of these modification enzymes lead to the production of diverse shearone derivatives, shearone I being the end product of the pathway. The alpha-ketoglutarate-dependent dioxygenase esdpJ seems not to be involved in this pathway. The protein is Terpene cyclase esdpB of Penicillium shearii (Eupenicillium shearii).